Consider the following 409-residue polypeptide: Broad specificity amino-acid racemase (409 aa).

An N-terminal signal peptide occupies residues 1–25 (MRLKKTLLSIAIAAATFTPAMHSIA). Cysteine 72 and cysteine 98 are disulfide-bonded. The active-site Proton acceptor is the lysine 76. N6-(pyridoxal phosphate)lysine is present on lysine 76. Residue arginine 175 participates in substrate binding. Residue tyrosine 301 is the Proton acceptor of the active site. Position 349 (methionine 349) interacts with substrate.

This sequence belongs to the alanine racemase family. Bsr subfamily. Pyridoxal 5'-phosphate is required as a cofactor.

It is found in the periplasm. The enzyme catalyses an L-alpha-amino acid = a D-alpha-amino acid. The catalysed reaction is L-lysine = D-lysine. It catalyses the reaction L-arginine = D-arginine. In terms of biological role, amino-acid racemase able to utilize a broad range of substrates. This chain is Broad specificity amino-acid racemase, found in Vibrio parahaemolyticus serotype O3:K6 (strain RIMD 2210633).